A 490-amino-acid polypeptide reads, in one-letter code: ATP synthase subunit beta, chloroplastic (490 aa).

170 to 177 (GGAGVGKT) is an ATP binding site.

This sequence belongs to the ATPase alpha/beta chains family. As to quaternary structure, F-type ATPases have 2 components, CF(1) - the catalytic core - and CF(0) - the membrane proton channel. CF(1) has five subunits: alpha(3), beta(3), gamma(1), delta(1), epsilon(1). CF(0) has four main subunits: a(1), b(1), b'(1) and c(9-12).

It localises to the plastid. The protein resides in the chloroplast thylakoid membrane. It catalyses the reaction ATP + H2O + 4 H(+)(in) = ADP + phosphate + 5 H(+)(out). In terms of biological role, produces ATP from ADP in the presence of a proton gradient across the membrane. The catalytic sites are hosted primarily by the beta subunits. This chain is ATP synthase subunit beta, chloroplastic, found in Cressa truxillensis (Spreading alkaliweed).